Here is a 411-residue protein sequence, read N- to C-terminus: Carbohydrate sulfotransferase 1 (411 aa).

The Cytoplasmic segment spans residues 1-2 (MQ). A helical; Signal-anchor for type II membrane protein membrane pass occupies residues 3–23 (CSWKAVLLLALASIAIQYTAI). The Lumenal portion of the chain corresponds to 24–411 (RTFTAKSFHT…VEERDFRPFS (388 aa)). Asparagine 56 carries an N-linked (GlcNAc...) asparagine glycan. Position 69-75 (69-75 (TRSGSSF)) interacts with 3'-phosphoadenylyl sulfate. Asparagine 145 and asparagine 189 each carry an N-linked (GlcNAc...) asparagine glycan. 234-242 (RDPRGILAS) is a binding site for 3'-phosphoadenylyl sulfate. N-linked (GlcNAc...) asparagine glycosylation occurs at asparagine 334. Residues 337–339 (RGD) carry the Cell attachment site motif.

The protein belongs to the sulfotransferase 1 family. Gal/GlcNAc/GalNAc subfamily. Widely expressed at low level. Expressed in brain and skeletal muscle. Expressed by high endothelial cells (HEVs) and leukocytes.

The protein resides in the golgi apparatus membrane. It catalyses the reaction 3'-phosphoadenylyl sulfate + keratan = adenosine 3',5'-bisphosphate + keratan 6'-sulfate.. It participates in glycan metabolism. Functionally, sulfotransferase that utilizes 3'-phospho-5'-adenylyl sulfate (PAPS) as sulfonate donor to catalyze the transfer of sulfate to position 6 of internal galactose (Gal) residues of keratan. Cooperates with B4GALT4 and B3GNT7 glycosyltransferases and CHST6 sulfotransferase to construct and elongate disulfated disaccharide unit [-&gt;3(6-sulfoGalbeta)1-&gt;4(6-sulfoGlcNAcbeta)1-&gt;] within keratan sulfate polymer. Has a preference for sulfating keratan sulfate, but it also transfers sulfate to the unsulfated polymer. Involved in biosynthesis of phosphacan, a major keratan sulfate proteoglycan in the developing brain. Involved in biosynthesis of 6-sulfoGalbeta-containing O-linked glycans in high endothelial venules of lymph nodes. May act in a synergistic manner with CHST4 to generate sialyl 6',6-disulfo Lewis X motif, a recognition determinant for immune cell receptors implicated in leukocyte trafficking. Catalyzes sulfation of N-acetyllactosamine (LacNAc) oligosaccharides with highest efficiency for sialylated LacNAc structures. This Homo sapiens (Human) protein is Carbohydrate sulfotransferase 1.